The chain runs to 158 residues: Cyclic pyranopterin monophosphate synthase (158 aa).

Substrate-binding positions include 75-77 (LCH) and 113-114 (ME). Asp-128 is an active-site residue.

It belongs to the MoaC family. As to quaternary structure, homohexamer; trimer of dimers.

The enzyme catalyses (8S)-3',8-cyclo-7,8-dihydroguanosine 5'-triphosphate = cyclic pyranopterin phosphate + diphosphate. Its pathway is cofactor biosynthesis; molybdopterin biosynthesis. Its function is as follows. Catalyzes the conversion of (8S)-3',8-cyclo-7,8-dihydroguanosine 5'-triphosphate to cyclic pyranopterin monophosphate (cPMP). The sequence is that of Cyclic pyranopterin monophosphate synthase from Paraburkholderia xenovorans (strain LB400).